Here is a 5430-residue protein sequence, read N- to C-terminus: Microtubule-actin cross-linking factor 1 (5430 aa).

The disordered stretch occupies residues 1 to 47 (MSSSDEETLSERSCRSERSCRSERSYRSERSGSLSPCPPGDTLPWNL). Residues 1–295 (MSSSDEETLS…VITYVSSIYD (295 aa)) are actin-binding. A Phosphoserine modification is found at serine 4. Positions 9-30 (LSERSCRSERSCRSERSYRSER) are enriched in basic and acidic residues. 2 positions are modified to phosphoserine: serine 35 and serine 57. Calponin-homology (CH) domains follow at residues 78 to 181 (RVQK…LHFQ) and 194 to 298 (MSAK…DAFP). LRR repeat units lie at residues 148-171 (QRQVKLVNIRNDDITDGNPKLTLG) and 240-264 (LVDMERVQIQSNRENLEQAFEVAER). A Phosphoserine modification is found at serine 280. 2 LRR repeats span residues 377-399 (LYKLLEVWIEFGRIKLPQGYHPN) and 441-464 (LNCEEKLTLAKNTLQADAAHLESG). The SH3 domain occupies 868-925 (KSTLSVKAICDYRQIEITICKNDECVLEDNSQRTKWKVISPTGNEAMVPSVCLLIPPP). Residues 1050–1073 (ISELKNIRLRLEECEQRLLKQIQS) form an LRR 5 repeat. Serine 1122 carries the post-translational modification Phosphoserine. 3 LRR repeats span residues 1128-1154 (ATTLRSELNLMVEKMDHVYGLSIVCLN), 1187-1210 (PADLSALESHRTTLQHWLSDVKDK), and 1257-1282 (HRVIAQLETRQSEVESIQEVLRDYRA). 2 positions are modified to phosphoserine: serine 1367 and serine 1376. LRR repeat units lie at residues 1579-1602 (QQELSALQQNQSDLKDLQGDIQNH) and 1629-1653 (LTALREKLYQAKEQYEGLQDRTREA). 2 Spectrin repeats span residues 1816–1891 (ELQK…NFEE) and 1933–2041 (QYQQ…ALLQ). A Phosphoserine modification is found at serine 1860. Residues 1869 to 1891 (KGDLRFVTISGQKVLETENNFEE) form an LRR 11 repeat. LRR repeat units follow at residues 2058-2083 (LQSMKEVEQNLEGEQVAALSSGLIQE) and 2194-2220 (IQELTLEMEDQKENLGTLEHLVTALGS). The Spectrin 3 repeat unit spans residues 2399 to 2507 (RMEEVQKEAS…TVARQKQLEE (109 aa)). A phosphoserine mark is found at serine 2429 and serine 2454. LRR repeat units lie at residues 2444–2467 (KAFLAELEQNSPKIQKVKEALAGL), 2534–2557 (GVLGPLSIDPNMLNAQKQQVQFML), and 2702–2725 (KKRLETVALPLQGLEDLAADRMNR). Spectrin repeat units follow at residues 2733 to 2837 (TQQF…SRLK) and 2842 to 2945 (KAQK…SLEE). Serine 2769 and serine 2895 each carry phosphoserine. 3 LRR repeats span residues 2984-3009 (NKNLEKLKAQREVLQALDPQVDYLRD), 3105-3127 (NKIQALRLDIEDSEAECRKMLEE), and 3214-3237 (KEQVDPLQVKLQQVNGLGQGLIQS). Spectrin repeat units lie at residues 3169–3274 (EDFY…QLQE), 3281–3383 (KFQD…QLED), 3388–3491 (AKQF…SLLE), 3714–3818 (RSQQ…ARLE), 3825–3927 (NQFW…ALDE), 4047–4152 (LAEK…KLED), 4157–4261 (AVQY…HKLE), 4267–4370 (LGQF…QQLQ), 4375–4481 (QAQG…KLEE), 4486–4589 (ATEF…RSLD), 4594–4700 (RAKQ…KLEE), 4707–4808 (QFMD…RLEQ), and 4812–4916 (QAEE…QRLE). Position 3368 is a phosphothreonine (threonine 3368). LRR repeat units follow at residues 3737-3761 (MALGPIRLEQDQTTAQLQVQKAFSI) and 3846-3870 (AQLPPPAVDHEQLRQQQEEMRQLRE). Phosphoserine is present on serine 4074. At lysine 4252 the chain carries N6-acetyllysine. The stretch at 4538 to 4561 (RDQIIELDQTGNQLKFLSQKQDVV) is one LRR 22 repeat. Positions 4993–5023 (PTHAPFIEKSRSGSRKSLNQPTPPPMPILSQ) are disordered. Serine 5009 carries the post-translational modification Phosphoserine. 2 EF-hand domains span residues 5083-5118 (HKKSRVMDFFRRIDKDQDGKITRQEFIDGILASKFP) and 5119-5154 (TTKLEMTAVADIFDRDGDGYIDYYEFVAALHPNKDA). Positions 5096, 5098, 5100, 5102, 5107, 5132, 5134, 5136, 5138, and 5143 each coordinate Ca(2+). Positions 5159 to 5231 (TDADKIEDEV…EFLVKNDPCR (73 aa)) constitute a GAR domain. The C-terminal tail stretch occupies residues 5159–5430 (TDADKIEDEV…ASPRTPCPKR (272 aa)). The tract at residues 5247-5430 (PEGASQGMTP…ASPRTPCPKR (184 aa)) is disordered. Residues 5267–5301 (SSRAASPTRSSSSASQSNHSCTSMPSSPATPASGT) show a composition bias toward low complexity. Threonine 5296 bears the Phosphothreonine mark. Residues 5317-5341 (TFHSSRTSLAGDTSNSSSPASTGAK) show a composition bias toward polar residues. Serine 5321 and serine 5334 each carry phosphoserine. Over residues 5352 to 5366 (SRPGSRAGSRAGSRA) the composition is skewed to low complexity. The tract at residues 5355 to 5370 (GSRAGSRAGSRASSRR) is 4 X 4 AA tandem repeats of [GS]-S-R-[AR]. 2 positions are modified to phosphoserine: serine 5372 and serine 5375. Residues 5381–5391 (ETQSACSDTSE) show a composition bias toward polar residues. Over residues 5392–5403 (SSAAGGQGSSRR) the composition is skewed to low complexity.

This sequence belongs to the plakin or cytolinker family. In terms of assembly, interacts with MAPRE1, CLASP1, CLASP2 and GOLGA4. Interacts with AXIN1 and LRP6. Found in a complex composed of MACF1, APC; AXIN1, CTNNB1 and GSK3B. Interacts with CAMSAP3. In terms of processing, phosphorylated on serine residues in the C-terminal tail by GSK3B. Phosphorylation inhibits microtubule-binding and this plays a critical role in bulge stem cell migration and skin wound repair. Wnt-signaling can repress phosphorylation.

It localises to the cytoplasm. The protein resides in the cytoskeleton. Its subcellular location is the golgi apparatus. It is found in the cell membrane. The protein localises to the cell projection. It localises to the ruffle membrane. The protein resides in the membrane. Functionally, F-actin-binding protein which plays a role in cross-linking actin to other cytoskeletal proteins and also binds to microtubules. Plays an important role in ERBB2-dependent stabilization of microtubules at the cell cortex. Acts as a positive regulator of Wnt receptor signaling pathway and is involved in the translocation of AXIN1 and its associated complex (composed of APC, CTNNB1 and GSK3B) from the cytoplasm to the cell membrane. Has actin-regulated ATPase activity and is essential for controlling focal adhesions (FAs) assembly and dynamics. Interaction with CAMSAP3 at the minus ends of non-centrosomal microtubules tethers microtubules minus-ends to actin filaments, regulating focal adhesion size and cell migration. May play role in delivery of transport vesicles containing GPI-linked proteins from the trans-Golgi network through its interaction with GOLGA4. Plays a key role in wound healing and epidermal cell migration. Required for efficient upward migration of bulge cells in response to wounding and this function is primarily rooted in its ability to coordinate microtubule dynamics and polarize hair follicle stem cells. As a regulator of actin and microtubule arrangement and stabilization, it plays an essential role in neurite outgrowth, branching and spine formation during brain development. The sequence is that of Microtubule-actin cross-linking factor 1 from Rattus norvegicus (Rat).